A 476-amino-acid polypeptide reads, in one-letter code: Serine/threonine-protein kinase WAG1 (476 aa).

In terms of domain architecture, Protein kinase spans 93–400; it reads FKLVRHLGTG…AQDIKRHEFF (308 aa). Residues 99–107 and Lys124 each bind ATP; that span reads LGTGNLGRV. The active-site Proton acceptor is Asp219.

It belongs to the protein kinase superfamily. Ser/Thr protein kinase family. As to expression, expressed in root tips and lateral root primordia.

It is found in the cytoplasm. It localises to the cytosol. It carries out the reaction L-seryl-[protein] + ATP = O-phospho-L-seryl-[protein] + ADP + H(+). The enzyme catalyses L-threonyl-[protein] + ATP = O-phospho-L-threonyl-[protein] + ADP + H(+). Its function is as follows. Serine/threonine-protein kinase involved in the regulation of auxin signaling. Acts as a positive regulator of cellular auxin efflux and regulates organ development by enhancing PIN-mediated polar auxin transport. Phosphorylates conserved serine residues in the PIN auxin efflux carriers. Phosphorylation of PIN proteins is required and sufficient for apical-basal PIN polarity that enables directional intercellular auxin fluxes, which mediate differential growth, tissue patterning and organogenesis. Acts as a suppressor of root waving. This Arabidopsis thaliana (Mouse-ear cress) protein is Serine/threonine-protein kinase WAG1 (WAG1).